Consider the following 407-residue polypeptide: Transmembrane protein 184B (407 aa).

The tract at residues 1–25 (MTVRGDVLAPDPASPTTAAASPSVS) is disordered. Residues 9–25 (APDPASPTTAAASPSVS) are compositionally biased toward low complexity. 7 helical membrane-spanning segments follow: residues 40-60 (FLMT…ALLI), 84-104 (ILFI…FFTN), 121-141 (LVIY…SSIM), 178-198 (LQFC…QAFG), 214-234 (VTII…LFYF), 249-269 (FFMV…LAIL), and 290-310 (VAAG…ALAL). Residues 369 to 395 (TLEPGPTWRGGAHGLSRSHSLSGARDN) form a disordered region. Phosphoserine occurs at positions 388, 402, and 403.

Belongs to the TMEM184 family.

The protein resides in the membrane. Functionally, may activate the MAP kinase signaling pathway. In Homo sapiens (Human), this protein is Transmembrane protein 184B (TMEM184B).